We begin with the raw amino-acid sequence, 734 residues long: Photosystem I P700 chlorophyll a apoprotein A2 (734 aa).

The next 8 helical transmembrane spans lie at 46-69 (IFSSHFGHIAIIFLWTSGNLFHVA), 135-158 (LYNGSLFLLILSAIMLFAGWLHLQ), 175-199 (LNHHLSGLFGLSSLAWTGHLIHVAI), 273-291 (MAHHHLAIAIVFIIAGHMY), 330-353 (LHMQLGLALASLGVITSLVAQHMY), 369-395 (AALYTHHQYIAGFLMVGAFAHGAIFFI), 417-439 (AIISHLSWVSLFLGFHTLGLYIH), and 517-535 (FLVHHAIALGLHTTTLILV). [4Fe-4S] cluster-binding residues include Cys559 and Cys568. A run of 2 helical transmembrane segments spans residues 575–596 (AFYLSVFWMLNTIGWVTFYWHW) and 643–665 (LSVWAWMFLFGHLVWATGFMFLI). The chlorophyll a site is built by His654, Met662, and Tyr670. Trp671 lines the phylloquinone pocket. The helical transmembrane segment at 707–727 (LVGLVHFSVGYILTYAAFVIA) threads the bilayer.

This sequence belongs to the PsaA/PsaB family. As to quaternary structure, the PsaA/B heterodimer binds the P700 chlorophyll special pair and subsequent electron acceptors. PSI consists of a core antenna complex that captures photons, and an electron transfer chain that converts photonic excitation into a charge separation. The eukaryotic PSI reaction center is composed of at least 11 subunits. P700 is a chlorophyll a/chlorophyll a' dimer, A0 is one or more chlorophyll a, A1 is one or both phylloquinones and FX is a shared 4Fe-4S iron-sulfur center. is required as a cofactor.

The protein resides in the plastid. The protein localises to the chloroplast thylakoid membrane. It carries out the reaction reduced [plastocyanin] + hnu + oxidized [2Fe-2S]-[ferredoxin] = oxidized [plastocyanin] + reduced [2Fe-2S]-[ferredoxin]. PsaA and PsaB bind P700, the primary electron donor of photosystem I (PSI), as well as the electron acceptors A0, A1 and FX. PSI is a plastocyanin/cytochrome c6-ferredoxin oxidoreductase, converting photonic excitation into a charge separation, which transfers an electron from the donor P700 chlorophyll pair to the spectroscopically characterized acceptors A0, A1, FX, FA and FB in turn. Oxidized P700 is reduced on the lumenal side of the thylakoid membrane by plastocyanin or cytochrome c6. The polypeptide is Photosystem I P700 chlorophyll a apoprotein A2 (Gracilaria tenuistipitata var. liui (Red alga)).